The sequence spans 275 residues: Nitrogenase iron protein 2 (275 aa).

9–16 (GKGGIGKS) contacts ATP. Position 97 (cysteine 97) interacts with [4Fe-4S] cluster. Arginine 100 bears the ADP-ribosylarginine; by dinitrogenase reductase ADP-ribosyltransferase mark. Cysteine 132 is a binding site for [4Fe-4S] cluster.

This sequence belongs to the NifH/BchL/ChlL family. In terms of assembly, homodimer. [4Fe-4S] cluster is required as a cofactor. In terms of processing, the reversible ADP-ribosylation of Arg-100 inactivates the nitrogenase reductase and regulates nitrogenase activity.

It carries out the reaction N2 + 8 reduced [2Fe-2S]-[ferredoxin] + 16 ATP + 16 H2O = H2 + 8 oxidized [2Fe-2S]-[ferredoxin] + 2 NH4(+) + 16 ADP + 16 phosphate + 6 H(+). The key enzymatic reactions in nitrogen fixation are catalyzed by the nitrogenase complex, which has 2 components: the iron protein (component 2) and a component 1 which is either a molybdenum-iron protein, a vanadium-iron, or an iron-iron protein. The chain is Nitrogenase iron protein 2 (anfH) from Rhodobacter capsulatus (Rhodopseudomonas capsulata).